Here is a 485-residue protein sequence, read N- to C-terminus: NADH-quinone oxidoreductase subunit N (485 aa).

Transmembrane regions (helical) follow at residues leucine 8 to isoleucine 28, phenylalanine 35 to valine 55, glycine 78 to tyrosine 98, glutamate 104 to histidine 124, leucine 125 to tyrosine 145, tyrosine 159 to alanine 179, valine 203 to phenylalanine 223, proline 235 to methionine 255, methionine 271 to glutamine 291, leucine 297 to glutamine 317, glycine 327 to methionine 347, alanine 374 to glycine 394, tryptophan 408 to arginine 427, and alanine 449 to valine 469.

Belongs to the complex I subunit 2 family. As to quaternary structure, NDH-1 is composed of 13 different subunits. Subunits NuoA, H, J, K, L, M, N constitute the membrane sector of the complex.

The protein localises to the cell inner membrane. The enzyme catalyses a quinone + NADH + 5 H(+)(in) = a quinol + NAD(+) + 4 H(+)(out). Its function is as follows. NDH-1 shuttles electrons from NADH, via FMN and iron-sulfur (Fe-S) centers, to quinones in the respiratory chain. The immediate electron acceptor for the enzyme in this species is believed to be ubiquinone. Couples the redox reaction to proton translocation (for every two electrons transferred, four hydrogen ions are translocated across the cytoplasmic membrane), and thus conserves the redox energy in a proton gradient. The sequence is that of NADH-quinone oxidoreductase subunit N from Serratia proteamaculans (strain 568).